Consider the following 203-residue polypeptide: Guanylate kinase (203 aa).

A Guanylate kinase-like domain is found at 5 to 184 (GMLIVLSGPS…AVQRIEKIIE (180 aa)). Position 12-19 (12-19 (GPSGVGKG)) interacts with ATP.

It belongs to the guanylate kinase family.

It localises to the cytoplasm. It catalyses the reaction GMP + ATP = GDP + ADP. Essential for recycling GMP and indirectly, cGMP. The polypeptide is Guanylate kinase (Latilactobacillus sakei subsp. sakei (strain 23K) (Lactobacillus sakei subsp. sakei)).